Here is a 106-residue protein sequence, read N- to C-terminus: Iron-sulfur cluster assembly protein CyaY (106 aa).

The protein belongs to the frataxin family.

Functionally, involved in iron-sulfur (Fe-S) cluster assembly. May act as a regulator of Fe-S biogenesis. The chain is Iron-sulfur cluster assembly protein CyaY from Yersinia pseudotuberculosis serotype O:3 (strain YPIII).